Reading from the N-terminus, the 321-residue chain is DNA-directed RNA polymerase subunit alpha (321 aa).

The interval 1 to 235 (MAYQIECLET…DLFSPLKEVP (235 aa)) is alpha N-terminal domain (alpha-NTD). Residues 252–321 (QIPIEQLNLS…TLPPQKAARN (70 aa)) are alpha C-terminal domain (alpha-CTD).

This sequence belongs to the RNA polymerase alpha chain family. As to quaternary structure, homodimer. In cyanobacteria the RNAP catalytic core is composed of 2 alpha, 1 beta, 1 beta', 1 gamma and 1 omega subunit. When a sigma factor is associated with the core the holoenzyme is formed, which can initiate transcription.

The catalysed reaction is RNA(n) + a ribonucleoside 5'-triphosphate = RNA(n+1) + diphosphate. Functionally, DNA-dependent RNA polymerase catalyzes the transcription of DNA into RNA using the four ribonucleoside triphosphates as substrates. This is DNA-directed RNA polymerase subunit alpha from Thermosynechococcus vestitus (strain NIES-2133 / IAM M-273 / BP-1).